Here is a 186-residue protein sequence, read N- to C-terminus: Nuclear transcription factor Y subunit C-5 (186 aa).

Residues 166-186 (QMPGAWTEEDATGANGGNGGN) are disordered.

Belongs to the NFYC/HAP5 subunit family. In terms of assembly, heterotrimeric transcription factor composed of three components, NF-YA, NF-YB and NF-YC. NF-YB and NF-YC must interact and dimerize for NF-YA association and DNA binding. In terms of tissue distribution, expressed in inflorescences and flowers.

The protein localises to the nucleus. Functionally, stimulates the transcription of various genes by recognizing and binding to a CCAAT motif in promoters. The protein is Nuclear transcription factor Y subunit C-5 (NFYC5) of Arabidopsis thaliana (Mouse-ear cress).